We begin with the raw amino-acid sequence, 364 residues long: DNA polymerase IV (364 aa).

The 185-residue stretch at I14–G198 folds into the UmuC domain. Mg(2+)-binding residues include D18 and D116. E117 is an active-site residue.

This sequence belongs to the DNA polymerase type-Y family. In terms of assembly, monomer. The cofactor is Mg(2+).

Its subcellular location is the cytoplasm. It carries out the reaction DNA(n) + a 2'-deoxyribonucleoside 5'-triphosphate = DNA(n+1) + diphosphate. Its function is as follows. Poorly processive, error-prone DNA polymerase involved in untargeted mutagenesis. Copies undamaged DNA at stalled replication forks, which arise in vivo from mismatched or misaligned primer ends. These misaligned primers can be extended by PolIV. Exhibits no 3'-5' exonuclease (proofreading) activity. May be involved in translesional synthesis, in conjunction with the beta clamp from PolIII. The polypeptide is DNA polymerase IV (Streptococcus pyogenes serotype M4 (strain MGAS10750)).